A 428-amino-acid polypeptide reads, in one-letter code: Maltoporin (428 aa).

An N-terminal signal peptide occupies residues 1 to 24; it reads MTTLRKLPIALAVAAGVLSTQAMA.

The protein belongs to the porin LamB (TC 1.B.3) family. In terms of assembly, homotrimer formed of three 18-stranded antiparallel beta-barrels, containing three independent channels.

The protein resides in the cell outer membrane. The enzyme catalyses beta-maltose(in) = beta-maltose(out). In terms of biological role, involved in the transport of maltose and maltodextrins. The protein is Maltoporin of Yersinia enterocolitica serotype O:8 / biotype 1B (strain NCTC 13174 / 8081).